Reading from the N-terminus, the 124-residue chain is UPF0225 protein SCO1677 (124 aa).

This sequence belongs to the UPF0225 family.

The sequence is that of UPF0225 protein SCO1677 from Streptomyces coelicolor (strain ATCC BAA-471 / A3(2) / M145).